The sequence spans 429 residues: Glutamate-1-semialdehyde 2,1-aminomutase (429 aa).

At K264 the chain carries N6-(pyridoxal phosphate)lysine.

The protein belongs to the class-III pyridoxal-phosphate-dependent aminotransferase family. HemL subfamily. In terms of assembly, homodimer. Pyridoxal 5'-phosphate is required as a cofactor.

Its subcellular location is the cytoplasm. It carries out the reaction (S)-4-amino-5-oxopentanoate = 5-aminolevulinate. It participates in porphyrin-containing compound metabolism; protoporphyrin-IX biosynthesis; 5-aminolevulinate from L-glutamyl-tRNA(Glu): step 2/2. The protein is Glutamate-1-semialdehyde 2,1-aminomutase of Campylobacter curvus (strain 525.92).